The primary structure comprises 138 residues: DNA-directed RNA polymerase subunit omega (138 aa).

The interval 104 to 138 (GNSDGLENSSNSRDDNPLGRDNFFSTPENRNNTNS) is disordered. Positions 126-138 (FFSTPENRNNTNS) are enriched in polar residues.

The protein belongs to the RNA polymerase subunit omega family. As to quaternary structure, the RNAP catalytic core consists of 2 alpha, 1 beta, 1 beta' and 1 omega subunit. When a sigma factor is associated with the core the holoenzyme is formed, which can initiate transcription.

It carries out the reaction RNA(n) + a ribonucleoside 5'-triphosphate = RNA(n+1) + diphosphate. Promotes RNA polymerase assembly. Latches the N- and C-terminal regions of the beta' subunit thereby facilitating its interaction with the beta and alpha subunits. This chain is DNA-directed RNA polymerase subunit omega, found in Ehrlichia chaffeensis (strain ATCC CRL-10679 / Arkansas).